The chain runs to 182 residues: uncharacterized protein (182 aa).

A run of 2 helical transmembrane segments spans residues 76–96 (LLLA…LALA) and 114–130 (LDLL…LIGA).

Its subcellular location is the membrane. This is an uncharacterized protein from Saccharomyces cerevisiae (strain ATCC 204508 / S288c) (Baker's yeast).